Here is a 30-residue protein sequence, read N- to C-terminus: Photosystem I reaction center subunit XII (30 aa).

The helical transmembrane segment at 5–25 (SQIFFALCIALTAAVLAIGLG) threads the bilayer.

Belongs to the PsaM family.

The protein localises to the plastid. Its subcellular location is the chloroplast thylakoid membrane. This is Photosystem I reaction center subunit XII from Emiliania huxleyi (Coccolithophore).